A 911-amino-acid chain; its full sequence is Inositol 1,4,5-triphosphate receptor associated 1 (911 aa).

Basic and acidic residues predominate over residues 1–11 (MVKAPQSEERL). Disordered stretches follow at residues 1–21 (MVKA…NNSV), 39–122 (EVPG…HRHL), 174–405 (LTRR…GPRL), and 478–498 (EQEK…ESKG). Positions 68 to 86 (AAQSPAGQDPATTGISCSP) are enriched in polar residues. Basic residues predominate over residues 111–122 (HSPHRRLSHRHL). Position 118 is a phosphoserine (Ser118). Residues 152 to 184 (SEEDKKKNLALLEEAKLVSERFLTRRGRKSRSS) are interaction with PRKG1. The segment covering 183-212 (SSPGESSPAVSPNLSPGASPASSQSNSLTV) has biased composition (polar residues). Positions 277-292 (TVEKSKEITIEQKENF) are enriched in basic and acidic residues. Phosphoserine is present on Ser393. Positions 534–580 (NVFVQLSLAFRNDSYTLESRINQAERERNLTEENTEKELENFKASIT) are interaction with ITPR1. A coiled-coil region spans residues 547–645 (SYTLESRINQ…MQYVENLKRT (99 aa)). Phosphoserine is present on residues Ser683 and Ser696. Disordered regions lie at residues 706–766 (LNLP…TPSC) and 787–829 (YQEG…KEQR). A compositionally biased stretch (low complexity) spans 708 to 728 (LPGQSPSSSPIPSLPALSESS). Positions 790-801 (GLKKTKELQGLR) are enriched in basic and acidic residues. Residues 802 to 825 (EEEEEQKSESPEEPEEVAETEEEE) show a composition bias toward acidic residues. The chain crosses the membrane as a helical span at residues 853–873 (VIWMMAAAMLVLTVVLGLYGS).

In terms of assembly, interacts with PRKG1/cGKI-beta and ITPR1/IP3R type I. Part of cGMP kinase signaling complex at least composed of ACTA2/alpha-actin, CNN1/calponin H1, PLN/phospholamban, PRKG1 and ITPR1. Interacts with HCN4; regulates HCN4 channel activity. Phosphorylated by PRKG1/cGKI-beta. Phosphorylation at Ser-696 is necessary for PRKG1-induced calcium release in the cytosol. In terms of tissue distribution, highly expressed in trachea, aorta and uterus.

The protein localises to the sarcoplasmic reticulum. It localises to the cytoplasm. It is found in the perinuclear region. The protein resides in the membrane. Plays a role as NO/PRKG1-dependent regulator of IP3-induced calcium release; its phosphorylation by PRKG1 inhibits bradykinin and IP3-induced calcium release from intracellular stores. Recruits PRKG1 to the endoplasmic reticulum and may mediate the assembly of PRKG1 and ITPR1 in a macrocomplex. Involved in PRKG1 signaling cascade leading to inhibition of platelet activation and aggregation. Also mediates NO-dependent inhibition of calcium signaling in gastrointestinal smooth muscle contributing to NO-dependent relaxation. Plays a role in the regulation of cellular excitability by regulating the hyperpolarization-activated cyclic nucleotide-gated HCN4 channel activity. The protein is Inositol 1,4,5-triphosphate receptor associated 1 (IRAG1) of Bos taurus (Bovine).